The following is a 919-amino-acid chain: MAASTKPTTKLSTEEDDVSRRDSESSADFMKSNEELQATMIPEDDGANPATGQPTWTILSDTEIKSVLVVASFAAAISPFSTSTYYPVVTAIARDLGVSVSKINLTMSSYQIFQGVAPTITAAFADTYGRRPMFLVCFVTYFVANVGLALQNDFTTLLVLRCLQSTGSSGTFALAQAVTADITTRAERGRYLIYATLGSTLGPFIGPVIGGLLVKFLGWRSVFWFLLCMGTVFALLIFIFFGETARPIVGDGSIPPQSWNRSYLQMRSKGVSNLKPNLASLERRKSRPNPLTSLALLWDRENFILSVSGGLLYAGYSSVTSVLASQLQQRYKYDAVQVGLCYLPVGFGSLLAYRTTVRLMDWNFEREAKKQGLVIVKNRQTDISRFDLEKARLGFVFPMILVCSGLLVAYGWQMHYHAPLAPILVTMFLIAIILTGVMNAIAALLTDVNRENAAAVGAAMNLTRLLLGAGAVAVVGPLNKSAGIGWTATVTAGFSYNVNTKGIQTKRRAAAIFEVSRATLHRRCDGKRARRDCQPNSKKLIQQEEEVILKYILDLDTRGFLPTYAAERGMADKLLSTRGGSPVGRDWPRNFVKHKAKYSILDEDVYSFDEAGFMMGKITTQLAVTGSERRGRPKAIQPENREWVTLIQGINAAGWAISPFVVFAGQHHLSAWYEEDIPRDWAIAVSDNGWTTNEIGVEWLEHFIKYTDGKAVGVRRLLIFDGHESHHSLKSRELCKENNIYTLYMPPHSSHLLQPLDIGCFSPLKRAYSREIEALICHHINHITKLEFLPAFKAAFQRSFTSANICSSFRGAGLVPLQPDIVLSKLDVRLLTHIPAASPEAPWEAKTPSNRKKKQIQKRGTLTKGEGEDTLAQKEADQQIEREQRQGGEQSGRSRQALARSLEALEVGGVAHSLNGSFV.

Positions 1–11 (MAASTKPTTKL) are enriched in polar residues. The disordered stretch occupies residues 1 to 33 (MAASTKPTTKLSTEEDDVSRRDSESSADFMKSN). Residues 69–89 (VVASFAAAISPFSTSTYYPVV) form a helical membrane-spanning segment. N-linked (GlcNAc...) asparagine glycosylation occurs at Asn104. Transmembrane regions (helical) follow at residues 132 to 152 (PMFL…ALQN), 192 to 212 (LIYA…IGGL), and 222 to 242 (VFWF…IFFG). A glycan (N-linked (GlcNAc...) asparagine) is linked at Asn260. The next 4 helical transmembrane spans lie at 303-323 (FILS…TSVL), 333-353 (YDAV…LLAY), 393-413 (LGFV…YGWQ), and 418-438 (APLA…TGVM). A glycan (N-linked (GlcNAc...) asparagine) is linked at Asn461. The chain crosses the membrane as a helical span at residues 465-485 (LLLGAGAVAVVGPLNKSAGIG). The 169-residue stretch at 641–809 (REWVTLIQGI…FTSANICSSF (169 aa)) folds into the DDE-1 domain. Positions 840–897 (EAPWEAKTPSNRKKKQIQKRGTLTKGEGEDTLAQKEADQQIEREQRQGGEQSGRSRQA) are disordered. Residues 865–886 (GEGEDTLAQKEADQQIEREQRQ) are compositionally biased toward basic and acidic residues. The segment covering 887 to 896 (GGEQSGRSRQ) has biased composition (low complexity). Asn915 is a glycosylation site (N-linked (GlcNAc...) asparagine).

The protein belongs to the major facilitator superfamily. CAR1 family.

Its subcellular location is the membrane. In terms of biological role, MFS-type transporter; part of the gene cluster that mediates the biosynthesis of squalestatin S1 (SQS1, also known as zaragozic acid A), a heavily oxidized fungal polyketide that offers potent cholesterol lowering activity by targeting squalene synthase (SS). This is MFS-type transporter clz9 from Cochliobolus lunatus (Filamentous fungus).